Consider the following 574-residue polypeptide: Putative diflavin flavoprotein A 3 (574 aa).

Residues Gln-43–His-236 form a zinc metallo-hydrolase region. His-92, Glu-94, Asp-96, His-159, Asp-178, and His-236 together coordinate Fe cation. The Flavodoxin-like domain occupies Ile-265 to Arg-409. Residues Ser-410–Tyr-574 form a flavodoxin-reductase-like region.

This sequence in the N-terminal section; belongs to the zinc metallo-hydrolase group 3 family. In the C-terminal section; belongs to the flavodoxin reductase family. Requires Fe cation as cofactor.

Mediates electron transfer from NADH to oxygen, reducing it to water. This modular protein has 3 redox cofactors, in other organisms the same activity requires 2 or 3 proteins. The protein is Putative diflavin flavoprotein A 3 (dfa3) of Nostoc sp. (strain PCC 7120 / SAG 25.82 / UTEX 2576).